The following is a 337-amino-acid chain: Putative olfactory receptor 1F12P (337 aa).

Topologically, residues 1–25 are extracellular; sequence MEGKNQTNISEFLLLGFSSWQQQQV. N-linked (GlcNAc...) asparagine glycans are attached at residues asparagine 5 and asparagine 8. The chain crosses the membrane as a helical span at residues 26–49; the sequence is LLFALFLCLYLTGLFGNLLILLAI. At 50–57 the chain is on the cytoplasmic side; that stretch reads GSDHCLHT. A helical membrane pass occupies residues 58–79; the sequence is PMYFFLANLSLVDLCLPSATVP. Residues 80-100 lie on the Extracellular side of the membrane; sequence KMLLNIQTQTQTISYPGCLAQ. Cysteine 97 and cysteine 189 are oxidised to a cystine. The chain crosses the membrane as a helical span at residues 101 to 120; it reads MYFCMMFANMDNFLLTVMAY. The Cytoplasmic segment spans residues 121–139; sequence DRYVAICHPLHYSTIMALR. A helical transmembrane segment spans residues 140–158; it reads LCASLVAAPWVIAILNPLL. Topologically, residues 159–196 are extracellular; that stretch reads HTLMMAHLHFCSDNVIHHFFCDINSLLPLSCSDTSLNQ. The helical transmembrane segment at 197 to 219 threads the bilayer; that stretch reads LSVLATVGLIFVVPSVCILVSYI. The Cytoplasmic segment spans residues 220-236; it reads LIVSAVMKVPSAQGKLK. The chain crosses the membrane as a helical span at residues 237-259; it reads AFSTCGSHLALVILFYGAITGVY. The Extracellular portion of the chain corresponds to 260-272; that stretch reads MSPLSNHSTEKDS. N-linked (GlcNAc...) asparagine glycosylation is present at asparagine 265. Residues 273-292 traverse the membrane as a helical segment; sequence AASVIFMVVAPVLNPFIYSL. Residues 293–337 are Cytoplasmic-facing; sequence RNNELKGTLKKTLSRPGAVAHACNPSTLGGRGGWIMRSGDRDHPG.

The protein belongs to the G-protein coupled receptor 1 family.

The protein resides in the cell membrane. Functionally, odorant receptor. The protein is Putative olfactory receptor 1F12P of Homo sapiens (Human).